The sequence spans 162 residues: Small ribosomal subunit protein uS13 (162 aa).

Positions 142-162 are disordered; the sequence is RGQRTKSTGRRGSTVGVSRKK.

This sequence belongs to the universal ribosomal protein uS13 family. In terms of assembly, part of the 30S ribosomal subunit. Forms a loose heterodimer with protein S19. Forms two bridges to the 50S subunit in the 70S ribosome.

Its function is as follows. Located at the top of the head of the 30S subunit, it contacts several helices of the 16S rRNA. In the 70S ribosome it contacts the 23S rRNA (bridge B1a) and protein L5 of the 50S subunit (bridge B1b), connecting the 2 subunits; these bridges are implicated in subunit movement. The protein is Small ribosomal subunit protein uS13 of Methanosarcina mazei (strain ATCC BAA-159 / DSM 3647 / Goe1 / Go1 / JCM 11833 / OCM 88) (Methanosarcina frisia).